A 104-amino-acid chain; its full sequence is Flagellar hook-basal body complex protein FliE (104 aa).

Belongs to the FliE family.

It localises to the bacterial flagellum basal body. The sequence is that of Flagellar hook-basal body complex protein FliE from Escherichia fergusonii (strain ATCC 35469 / DSM 13698 / CCUG 18766 / IAM 14443 / JCM 21226 / LMG 7866 / NBRC 102419 / NCTC 12128 / CDC 0568-73).